The chain runs to 518 residues: Delta(14)-sterol reductase erg24B (518 aa).

N-linked (GlcNAc...) asparagine glycosylation occurs at N36. Helical transmembrane passes span 110 to 130 (VTMWVLSYYLLSLLMQVFLPG), 150 to 170 (AFLSAVLILSGCAVGTYLYGT), 182 to 202 (YVQVITANLIICTAIAIFVYL), 294 to 314 (IVLTTAFQAFYVLDALYMEPA), 321 to 341 (VIMDGFGFMLSFGDMVWVPFL), and 355 to 375 (ELGLSGILIVLAVTAAGYVIF). NADP(+)-binding positions include K382, R386, L409, W414, and 421–422 (NY). A helical transmembrane segment spans residues 464-484 (SRGWGMIFTYFYMIYFGVLLL). Residues D490, 494-498 (CKRKY), and Y505 each bind NADP(+).

This sequence belongs to the ERG4/ERG24 family.

It localises to the endoplasmic reticulum membrane. It participates in steroid metabolism; ergosterol biosynthesis. Its function is as follows. Delta(14)-sterol reductase; part of the third module of ergosterol biosynthesis pathway that includes the late steps of the pathway. Catalyzes the reduction of the C14=C15 double bond within 4,4,24-trimethyl ergosta-8,14,24(28)-trienolto produce 4,4-dimethylfecosterol. The third module or late pathway involves the ergosterol synthesis itself through consecutive reactions that mainly occur in the endoplasmic reticulum (ER) membrane. Firstly, the squalene synthase erg9 catalyzes the condensation of 2 farnesyl pyrophosphate moieties to form squalene, which is the precursor of all steroids. Squalene synthase is crucial for balancing the incorporation of farnesyl diphosphate (FPP) into sterol and nonsterol isoprene synthesis. Secondly, squalene is converted into lanosterol by the consecutive action of the squalene epoxidase erg1 and the lanosterol synthase erg7. Then, the delta(24)-sterol C-methyltransferase erg6 methylates lanosterol at C-24 to produce eburicol. Eburicol is the substrate of the sterol 14-alpha demethylase encoded by cyp51A and cyp51B, to yield 4,4,24-trimethyl ergosta-8,14,24(28)-trienol. The C-14 reductase erg24 then reduces the C14=C15 double bond which leads to 4,4-dimethylfecosterol. A sequence of further demethylations at C-4, involving the C-4 demethylation complex containing the C-4 methylsterol oxidases erg25A or erg25B, the sterol-4-alpha-carboxylate 3-dehydrogenase erg26 and the 3-keto-steroid reductase erg27, leads to the production of fecosterol via 4-methylfecosterol. The C-8 sterol isomerase erg2 then catalyzes the reaction which results in unsaturation at C-7 in the B ring of sterols and thus converts fecosterol to episterol. The sterol-C5-desaturase erg3B then catalyzes the introduction of a C-5 double bond in the B ring to produce 5-dehydroepisterol. The 2 other sterol-C5-desaturases, erg3A and erg3C, seem to be less important in ergosterol biosynthesis. The C-22 sterol desaturase erg5 further converts 5-dehydroepisterol into ergosta-5,7,22,24(28)-tetraen-3beta-ol by forming the C-22(23) double bond in the sterol side chain. Finally, ergosta-5,7,22,24(28)-tetraen-3beta-ol is substrate of the C-24(28) sterol reductases erg4A and erg4B to produce ergosterol. Possible alternative sterol biosynthetic pathways might exist from fecosterol to ergosterol, depending on the activities of the erg3 isoforms. In Aspergillus fumigatus (strain ATCC MYA-4609 / CBS 101355 / FGSC A1100 / Af293) (Neosartorya fumigata), this protein is Delta(14)-sterol reductase erg24B.